Here is a 402-residue protein sequence, read N- to C-terminus: CCA-adding enzyme (402 aa).

Residues glycine 32 and arginine 35 each coordinate ATP. 2 residues coordinate CTP: glycine 32 and arginine 35. Positions 45 and 47 each coordinate Mg(2+). Residues arginine 119, aspartate 162, arginine 165, arginine 168, and arginine 171 each coordinate ATP. Residues arginine 119, aspartate 162, arginine 165, arginine 168, and arginine 171 each coordinate CTP.

The protein belongs to the tRNA nucleotidyltransferase/poly(A) polymerase family. Bacterial CCA-adding enzyme type 3 subfamily. Homodimer. The cofactor is Mg(2+).

It carries out the reaction a tRNA precursor + 2 CTP + ATP = a tRNA with a 3' CCA end + 3 diphosphate. It catalyses the reaction a tRNA with a 3' CCA end + 2 CTP + ATP = a tRNA with a 3' CCACCA end + 3 diphosphate. Its function is as follows. Catalyzes the addition and repair of the essential 3'-terminal CCA sequence in tRNAs without using a nucleic acid template. Adds these three nucleotides in the order of C, C, and A to the tRNA nucleotide-73, using CTP and ATP as substrates and producing inorganic pyrophosphate. tRNA 3'-terminal CCA addition is required both for tRNA processing and repair. Also involved in tRNA surveillance by mediating tandem CCA addition to generate a CCACCA at the 3' terminus of unstable tRNAs. While stable tRNAs receive only 3'-terminal CCA, unstable tRNAs are marked with CCACCA and rapidly degraded. The chain is CCA-adding enzyme from Lactococcus lactis subsp. cremoris (strain MG1363).